We begin with the raw amino-acid sequence, 314 residues long: Nodulation protein D 1 (314 aa).

An HTH lysR-type domain is found at 6–63 (LDLNLLVALDALMTERNLTAAARSINLSQPAMSAAVGRLRTYFNDDLFTMVGRELVPT). A DNA-binding region (H-T-H motif) is located at residues 23–42 (LTAAARSINLSQPAMSAAVG).

This sequence belongs to the LysR transcriptional regulatory family.

NodD regulates the expression of the nodABCFE genes which encode other nodulation proteins. NodD is also a negative regulator of its own expression. Binds flavonoids as inducers. The polypeptide is Nodulation protein D 1 (nodD1) (Rhizobium leguminosarum bv. phaseoli).